We begin with the raw amino-acid sequence, 350 residues long: Biotin synthase (350 aa).

In terms of domain architecture, Radical SAM core spans 41 to 265 (NEVQISRLLS…VMPLSRVRLS (225 aa)). Residues Cys56, Cys60, and Cys63 each contribute to the [4Fe-4S] cluster site. [2Fe-2S] cluster is bound by residues Cys100, Cys131, Cys191, and Arg263.

The protein belongs to the radical SAM superfamily. Biotin synthase family. In terms of assembly, homodimer. [4Fe-4S] cluster is required as a cofactor. The cofactor is [2Fe-2S] cluster.

It catalyses the reaction (4R,5S)-dethiobiotin + (sulfur carrier)-SH + 2 reduced [2Fe-2S]-[ferredoxin] + 2 S-adenosyl-L-methionine = (sulfur carrier)-H + biotin + 2 5'-deoxyadenosine + 2 L-methionine + 2 oxidized [2Fe-2S]-[ferredoxin]. Its pathway is cofactor biosynthesis; biotin biosynthesis; biotin from 7,8-diaminononanoate: step 2/2. Functionally, catalyzes the conversion of dethiobiotin (DTB) to biotin by the insertion of a sulfur atom into dethiobiotin via a radical-based mechanism. In Shewanella loihica (strain ATCC BAA-1088 / PV-4), this protein is Biotin synthase.